Reading from the N-terminus, the 700-residue chain is Polyphosphate kinase (700 aa).

Asparagine 45 serves as a coordination point for ATP. Residues arginine 373 and arginine 403 each contribute to the Mg(2+) site. Residues 428 to 462 enclose the PLD phosphodiesterase 1 domain; sequence PGMKIHAKLLLITRREEQGFVRYAHIGTGNFHERT. The Phosphohistidine intermediate role is filled by histidine 433. Residues tyrosine 466, arginine 562, and histidine 590 each coordinate ATP. The 31-residue stretch at 585–615 folds into the PLD phosphodiesterase 2 domain; sequence DRFLEHPRVLVVHNDGDPQVFISSADWMERN.

This sequence belongs to the polyphosphate kinase 1 (PPK1) family. Mg(2+) serves as cofactor. An intermediate of this reaction is the autophosphorylated ppk in which a phosphate is covalently linked to a histidine residue through a N-P bond.

The enzyme catalyses [phosphate](n) + ATP = [phosphate](n+1) + ADP. Its function is as follows. Catalyzes the reversible transfer of the terminal phosphate of ATP to form a long-chain polyphosphate (polyP). The protein is Polyphosphate kinase of Vibrio vulnificus (strain CMCP6).